The following is a 388-amino-acid chain: Nesprin-4 (388 aa).

Residues 1 to 339 lie on the Cytoplasmic side of the membrane; sequence MALVPPLGRE…GVPAPASKRP (339 aa). The disordered stretch occupies residues 60–92; that stretch reads ELKSTESATSPSRLPLASSHEHQDGGKPCEHSD. Residues 78 to 92 show a composition bias toward basic and acidic residues; that stretch reads SHEHQDGGKPCEHSD. Residues 331-388 form the KASH domain; it reads VPAPASKRPLTLFFLLLFLLLVGATLLLPLSGVSCCSHARLARTPYLVLSYVNGLPPI. Residues 340–360 form a helical; Anchor for type IV membrane protein membrane-spanning segment; it reads LTLFFLLLFLLLVGATLLLPL. Residues 361–388 lie on the Perinuclear space side of the membrane; the sequence is SGVSCCSHARLARTPYLVLSYVNGLPPI.

The protein belongs to the nesprin family. As to quaternary structure, core component of LINC complexes which are composed of inner nuclear membrane SUN domain-containing proteins coupled to outer nuclear membrane KASH domain-containing nesprins. SUN and KASH domain-containing proteins seem to bind each other promiscuously; however, differentially expression of LINC complex constituents can give rise to specific assemblies. Probably part of a SUN1-containing LINC complex. Interacts with kinesins KIF5B and KLC1. Post-translationally, the disulfid bond with SUN1 or SUN2 is required for stability of the respective LINC complex under tensile forces. Expressed in secretory epithelial cells, such as those found in exocrine pancreas, bulbourethral gland, mammary gland and salivary gland (at protein level). Also expressed in the cochlea, where it is restricted primarily to the 3 rows of outer hair cells and 1 row of inner hair cells (at protein level). Not detected in other cells of the cochlea, including Deiter's cells and pillar cells, nor in liver and kidney (at protein level).

Its subcellular location is the nucleus outer membrane. Its function is as follows. As a component of the LINC (LInker of Nucleoskeleton and Cytoskeleton) complex, involved in the connection between the nuclear lamina and the cytoskeleton. The nucleocytoplasmic interactions established by the LINC complex play an important role in the transmission of mechanical forces across the nuclear envelope and in nuclear movement and positioning. Behaves as a kinesin cargo, providing a functional binding site for kinesin-1 at the nuclear envelope. Hence may contribute to the establishment of secretory epithelial morphology, by promoting kinesin-dependent apical migration of the centrosome and Golgi apparatus and basal localization of the nucleus. The polypeptide is Nesprin-4 (Syne4) (Mus musculus (Mouse)).